Here is a 1188-residue protein sequence, read N- to C-terminus: DNA-directed RNA polymerase II subunit 2 (1188 aa).

D800 lines the Mg(2+) pocket. Disordered regions lie at residues 852 to 871 (SYDK…VSGE) and 877 to 897 (KTTP…TRRD). The segment covering 879–892 (TPISQDEAQGQSSR) has biased composition (polar residues). 4 residues coordinate Zn(2+): C1124, C1127, C1142, and C1145. The segment at 1124–1145 (CEVCGLIAIANLKKNSFECRGC) adopts a C4-type zinc-finger fold.

Belongs to the RNA polymerase beta chain family. Component of the RNA polymerase II complex consisting of at least 12 subunits.

It is found in the nucleus. It carries out the reaction RNA(n) + a ribonucleoside 5'-triphosphate = RNA(n+1) + diphosphate. In terms of biological role, DNA-dependent RNA polymerase catalyzes the transcription of DNA into RNA using the four ribonucleoside triphosphates as substrates. Second largest component of RNA polymerase II which synthesizes mRNA precursors and many functional non-coding RNAs. Proposed to contribute to the polymerase catalytic activity and forms the polymerase active center together with the largest subunit. Pol II is the central component of the basal RNA polymerase II transcription machinery. It is composed of mobile elements that move relative to each other. NRPB2 is part of the core element with the central large cleft, the clamp element that moves to open and close the cleft and the jaws that are thought to grab the incoming DNA template. Functionally, essential for the completion of the three rounds of mitosis in female megaspores required for the development of mature gametophytes. The chain is DNA-directed RNA polymerase II subunit 2 (NRPB2) from Arabidopsis thaliana (Mouse-ear cress).